A 488-amino-acid chain; its full sequence is Glutamate--tRNA ligase (488 aa).

A 'HIGH' region motif is present at residues 9–19 (PSPTGFLHIGG). The Zn(2+) site is built by C112, C114, C139, and H141. The 'KMSKS' region motif lies at 256 to 260 (KLSKR). K259 serves as a coordination point for ATP.

The protein belongs to the class-I aminoacyl-tRNA synthetase family. Glutamate--tRNA ligase type 1 subfamily. Monomer. It depends on Zn(2+) as a cofactor.

The protein resides in the cytoplasm. It catalyses the reaction tRNA(Glu) + L-glutamate + ATP = L-glutamyl-tRNA(Glu) + AMP + diphosphate. In terms of biological role, catalyzes the attachment of glutamate to tRNA(Glu) in a two-step reaction: glutamate is first activated by ATP to form Glu-AMP and then transferred to the acceptor end of tRNA(Glu). The sequence is that of Glutamate--tRNA ligase from Elusimicrobium minutum (strain Pei191).